We begin with the raw amino-acid sequence, 206 residues long: MVRPRSGIVLVLCAPSGTGKTTLTRRLLEEFPRFAFSVSYTTRQPRAGEEHGREYNFVDEETFIRLRDEGFFAEWAEVHGNFYGTPLEDTRQLLARGRDVLFDIDVQGAAQLRGSLKQGCYVFILPPSGAELERRLRARGTDPEDTIRRRLANARRELQQAHWFNAWIVNDNLEQAYDELRAAYLAATLSPTCRPELVDELLQDWR.

Residues 7-185 enclose the Guanylate kinase-like domain; the sequence is GIVLVLCAPS…AYDELRAAYL (179 aa). 14 to 21 is an ATP binding site; the sequence is APSGTGKT.

This sequence belongs to the guanylate kinase family.

Its subcellular location is the cytoplasm. It catalyses the reaction GMP + ATP = GDP + ADP. Its function is as follows. Essential for recycling GMP and indirectly, cGMP. The polypeptide is Guanylate kinase (Oleidesulfovibrio alaskensis (strain ATCC BAA-1058 / DSM 17464 / G20) (Desulfovibrio alaskensis)).